Reading from the N-terminus, the 117-residue chain is Large ribosomal subunit protein uL18 (117 aa).

This sequence belongs to the universal ribosomal protein uL18 family. As to quaternary structure, part of the 50S ribosomal subunit; part of the 5S rRNA/L5/L18/L25 subcomplex. Contacts the 5S and 23S rRNAs.

This is one of the proteins that bind and probably mediate the attachment of the 5S RNA into the large ribosomal subunit, where it forms part of the central protuberance. The chain is Large ribosomal subunit protein uL18 from Blochmanniella pennsylvanica (strain BPEN).